Here is a 394-residue protein sequence, read N- to C-terminus: MFEMYVDVDGKRLRCGYTTGSCSAGAAKAATIILFNKEKNLNEIEIATPKGIDVTMPIELIEKFDDYVECTILKDGGDDPDNTHGIEIKAMVKKIKPIDNKIFQDEDLQKFDSVLVEDSRAEKEDELERVVLKGGTGVGIVTREGLFIPKGQAAINPVPRKMIKEEVLKVLPPGERVEVIISVPQGEKVAKKTFNPRLGIVGGISILGTTGIVYPMSEDALKASIKIEITQKAINNERLVLTFGNLGDNYCKELGFKEEEVVTCSNFIGFALETCVSCKVKSIIIVGHIGKMSKIAYGCFNTHSKVNGVRLEVIALELALLGYDMSLVKRVLEEKTCEGAVKMLGDGYDKLYENIGNKIVQKIKEHVYGELEVDAVMYYGASNPILLWKSIKDN.

Belongs to the CbiD family.

The catalysed reaction is Co-precorrin-5B + S-adenosyl-L-methionine = Co-precorrin-6A + S-adenosyl-L-homocysteine. It participates in cofactor biosynthesis; adenosylcobalamin biosynthesis; cob(II)yrinate a,c-diamide from sirohydrochlorin (anaerobic route): step 6/10. In terms of biological role, catalyzes the methylation of C-1 in cobalt-precorrin-5B to form cobalt-precorrin-6A. This Clostridium beijerinckii (strain ATCC 51743 / NCIMB 8052) (Clostridium acetobutylicum) protein is Cobalt-precorrin-5B C(1)-methyltransferase.